The sequence spans 82 residues: UPF0180 protein BT9727_1277 (82 aa).

Belongs to the UPF0180 family.

This Bacillus thuringiensis subsp. konkukian (strain 97-27) protein is UPF0180 protein BT9727_1277.